Here is a 284-residue protein sequence, read N- to C-terminus: 2-dehydro-3-deoxyphosphooctonate aldolase (284 aa).

It belongs to the KdsA family.

It is found in the cytoplasm. The enzyme catalyses D-arabinose 5-phosphate + phosphoenolpyruvate + H2O = 3-deoxy-alpha-D-manno-2-octulosonate-8-phosphate + phosphate. The protein operates within carbohydrate biosynthesis; 3-deoxy-D-manno-octulosonate biosynthesis; 3-deoxy-D-manno-octulosonate from D-ribulose 5-phosphate: step 2/3. It functions in the pathway bacterial outer membrane biogenesis; lipopolysaccharide biosynthesis. In Actinobacillus succinogenes (strain ATCC 55618 / DSM 22257 / CCUG 43843 / 130Z), this protein is 2-dehydro-3-deoxyphosphooctonate aldolase.